We begin with the raw amino-acid sequence, 402 residues long: MIVIEKVDKTPVVKRLVEIVERKGQGHPDYIADGISEWVSRYLSRYYLEHFGIILHHNVDKTLVVGGQAAPRFGGGEVLQPIYILVSGRATYEVRTKDGVIKVPLGTLVMQAARDWIKQHFRFLDPDTHVVIDYKIGQGSADLVGIYDLGVKSVPLANDTSVGVGYAPLTPLEQLVYKTERLLNSRDFKAKYPEVGEDVKVMGVRVGKEVKLTVAAAMISKLVKDKSHYLSVKEDVKKAVEDLASKVAPEYNIEVVVNAADKPEHGIFYLTVTGTSAEHGDDGMTGRGNRANGLITPMRSMSLEAAAGKNPVSHVGKIYNVVAQRIADKVYNQVKDIIEVYVEIVSQIGKPINEPKILNVEIIKSGELTGEVRNEVEAIAREEIEKITQITDYILRGEVSLY.

137–142 (GQGSAD) is a binding site for ATP.

This sequence belongs to the AdoMet synthase 2 family. Requires Mg(2+) as cofactor.

It carries out the reaction L-methionine + ATP + H2O = S-adenosyl-L-methionine + phosphate + diphosphate. The protein operates within amino-acid biosynthesis; S-adenosyl-L-methionine biosynthesis; S-adenosyl-L-methionine from L-methionine: step 1/1. Functionally, catalyzes the formation of S-adenosylmethionine from methionine and ATP. This Pyrobaculum islandicum (strain DSM 4184 / JCM 9189 / GEO3) protein is S-adenosylmethionine synthase.